We begin with the raw amino-acid sequence, 144 residues long: Actin-associated protein FAM107A (144 aa).

Positions 67-94 (LQRVLEHRRRNQLIKKKKEELEAKRLQC) form a coiled coil. A Nuclear localization signal motif is present at residues 74 to 84 (RRRNQLIKKKK). The tract at residues 105–124 (QRLNQLEKPPEKEEDHAPEF) is disordered. Residues 112–124 (KPPEKEEDHAPEF) show a composition bias toward basic and acidic residues.

Belongs to the FAM107 family. Interacts with ACTB. Interacts with COMMD1; this interaction stabilizes COMMD1 in the nucleus. Interacts with MAP1A. Interacts with PRDX1. Interacts with F-actin.

It localises to the nucleus. Its subcellular location is the cytoplasm. The protein localises to the cytoskeleton. The protein resides in the stress fiber. It is found in the cell junction. It localises to the focal adhesion. Its subcellular location is the cell projection. The protein localises to the ruffle membrane. The protein resides in the synapse. In terms of biological role, stress-inducible actin-binding protein that plays a role in synaptic and cognitive functions by modulating actin filamentous (F-actin) dynamics. Mediates polymerization of globular actin to F-actin. Also binds to, stabilizes and bundles F-actin. Involved in synaptic function by regulating neurite outgrowth in an actin-dependent manner and for the acquisition of hippocampus-dependent cognitive function, such as learning and long-term memory. Plays a role in the actin and microtubule cytoskeleton organization; negatively regulates focal adhesion (FA) assembly promoting malignant glial cell migration in an actin-, microtubule- and MAP1A-dependent manner. Also involved in neuroblastoma G1/S phase cell cycle progression and cell proliferation inhibition by stimulating ubiquitination of NF-kappa-B subunit RELA and NF-kappa-B degradation in a COMMD1- and actin-dependent manner. May play a role in tumor development. The sequence is that of Actin-associated protein FAM107A (FAM107A) from Pan troglodytes (Chimpanzee).